A 589-amino-acid chain; its full sequence is Pyruvate kinase (589 aa).

Position 32 (Arg32) interacts with substrate. K(+) is bound by residues Asn34, Ser36, Asp66, and Thr67. 34-37 (NFSH) is an ATP binding site. The ATP site is built by Arg73 and Lys157. Glu223 contributes to the Mg(2+) binding site. Positions 246, 247, and 279 each coordinate substrate. Asp247 contributes to the Mg(2+) binding site.

The protein belongs to the pyruvate kinase family. This sequence in the C-terminal section; belongs to the PEP-utilizing enzyme family. As to quaternary structure, homotetramer. The cofactor is Mg(2+). K(+) serves as cofactor.

The catalysed reaction is pyruvate + ATP = phosphoenolpyruvate + ADP + H(+). The protein operates within carbohydrate degradation; glycolysis; pyruvate from D-glyceraldehyde 3-phosphate: step 5/5. Its activity is regulated as follows. Strongly activated by glucose-6-phosphate, ribose-5-phosphate and fructose-6-phosphate. Weak activator AMP and weak inhibitor fructose-1,6-bisphosphate can act as strong inhibitors in the presence of strong activators. The protein is Pyruvate kinase (pyk) of Lactobacillus delbrueckii subsp. bulgaricus.